The primary structure comprises 428 residues: MSPIWSNWPGEQVCAPSAIVRPTSEAELADVIAQAAKRGERVRAVGSGHSFTDIACTDGVMIDMTGLQRVLDVDQPTGLVTVEGGAKLRALGPQLAQRRLGLENQGDVDPQSITGATATATHGTGVRFQNLSARIVSLRLVTAGGEVLSLSEGDDYLAARVSLGALGVISQVTLQTVPLFTLHRHDQRRSLAQTLERLDEFVDGNDHFEFFVFPYADKALTRTMHRSDEQPKPTPGWQRMVGENFENGGLSLICQTGRRFPSVAPRLNRLMTNMMSSSTVQDRAYKVFATQRKVRFTEMEYAIPRENGREALQRVIDLVRRRSLPIMFPIEVRFSAPDDSFLSTAYGRDTCYIAVHQYAGMEFESYFRAVEEIMDDYAGRPHWGKRHYQTAATLRERYPQWDRFAAVRDRLDPDRVFLNDYTRRVLGP.

The FAD-binding PCMH-type domain maps to 12–179 (QVCAPSAIVR…SQVTLQTVPL (168 aa)).

The protein belongs to the oxygen-dependent FAD-linked oxidoreductase family. A divalent metal cation serves as cofactor.

The catalysed reaction is L-gulono-1,4-lactone + 2 Fe(III)-[cytochrome c] = L-ascorbate + 2 Fe(II)-[cytochrome c] + 3 H(+). It functions in the pathway cofactor biosynthesis; L-ascorbate biosynthesis. In terms of biological role, oxidizes L-gulono-1,4-lactone to L-xylo-hexulonolactone which spontaneously isomerizes to L-ascorbate. The chain is L-gulono-1,4-lactone dehydrogenase from Mycobacterium tuberculosis (strain CDC 1551 / Oshkosh).